Here is a 218-residue protein sequence, read N- to C-terminus: Large ribosomal subunit protein uL3 (218 aa).

The protein belongs to the universal ribosomal protein uL3 family. In terms of assembly, part of the 50S ribosomal subunit. Forms a cluster with proteins L14 and L19.

Its function is as follows. One of the primary rRNA binding proteins, it binds directly near the 3'-end of the 23S rRNA, where it nucleates assembly of the 50S subunit. The polypeptide is Large ribosomal subunit protein uL3 (Syntrophus aciditrophicus (strain SB)).